The primary structure comprises 241 residues: Ribosome-inactivating protein luffaculin 1 (241 aa).

N-linked (GlcNAc...) asparagine glycans are attached at residues N28, N33, N77, and N84. Residue E159 is part of the active site. N205 carries N-linked (GlcNAc...) asparagine glycosylation.

This sequence belongs to the ribosome-inactivating protein family. Type 1 RIP subfamily.

The catalysed reaction is Endohydrolysis of the N-glycosidic bond at one specific adenosine on the 28S rRNA.. The sequence is that of Ribosome-inactivating protein luffaculin 1 from Luffa acutangula (Ridged gourd).